The following is a 497-amino-acid chain: PHD finger protein 10 (497 aa).

A disordered region spans residues 1–61; sequence MAAAGPGAAL…SSRSCETSSQ (61 aa). Serine 11, serine 35, and serine 49 each carry phosphoserine. The interval 88–184 is essential to induce neural progenitor proliferation; that stretch reads MLQEQVSEYL…HYKEYSQMQQ (97 aa). Residues 88–294 form an SAY region; the sequence is MLQEQVSEYL…PPLDPELPAL (207 aa). Residue lysine 240 forms a Glycyl lysine isopeptide (Lys-Gly) (interchain with G-Cter in SUMO2) linkage. At serine 269 the chain carries Phosphoserine. Residues 284–295 are compositionally biased toward low complexity; that stretch reads EPPLDPELPALD. Residues 284 to 367 are disordered; that stretch reads EPPLDPELPA…KRSVLSKSVP (84 aa). The essential to induce neural progenitor proliferation stretch occupies residues 291–333; it reads LPALDSDGDSDDGEDGGGDEKRKNKGTSDSSSGNVSEGDSPPD. Residues serine 296, serine 300, serine 326, and serine 330 each carry the phosphoserine modification. Residues 296–307 are compositionally biased toward acidic residues; sequence SDGDSDDGEDGG. The span at 317–327 shows a compositional bias: polar residues; it reads TSDSSSGNVSE. The segment covering 344–358 has biased composition (basic and acidic residues); it reads KSKDKMATPRKDGSK. The PHD-type 1; degenerate zinc-finger motif lies at 378–435; sequence LCGICLKGKESNKKGKAESLIHCSQCDNSGHPSCLDMTMELVSMIKTYPWQCMECKTC. Lysine 384 is covalently cross-linked (Glycyl lysine isopeptide (Lys-Gly) (interchain with G-Cter in SUMO2)). The PHD-type 2; degenerate zinc finger occupies 437 to 480; sequence ICGQPHHEEEMMFCDVCDRGYHTFCVGLGAIPSGRWICDCCQRA.

Belongs to the SAYP family. In terms of assembly, component of neural progenitors-specific chromatin remodeling complex (npBAF complex) composed of at least, ARID1A/BAF250A or ARID1B/BAF250B, SMARCD1/BAF60A, SMARCD3/BAF60C, SMARCA2/BRM/BAF190B, SMARCA4/BRG1/BAF190A, SMARCB1/BAF47, SMARCC1/BAF155, SMARCE1/BAF57, SMARCC2/BAF170, PHF10/BAF45A, ACTL6A/BAF53A and actin. Interacts with ACTL6A/BAF53A, SMARCA2/BRM/BAF190B, SMARCA4/BRG1/BAF190A and PBRM1/BAF180.

It is found in the nucleus. Its function is as follows. Involved in transcription activity regulation by chromatin remodeling. Belongs to the neural progenitors-specific chromatin remodeling complex (npBAF complex) and is required for the proliferation of neural progenitors. During neural development a switch from a stem/progenitor to a post-mitotic chromatin remodeling mechanism occurs as neurons exit the cell cycle and become committed to their adult state. The transition from proliferating neural stem/progenitor cells to post-mitotic neurons requires a switch in subunit composition of the npBAF and nBAF complexes. As neural progenitors exit mitosis and differentiate into neurons, npBAF complexes which contain ACTL6A/BAF53A and PHF10/BAF45A, are exchanged for homologous alternative ACTL6B/BAF53B and DPF1/BAF45B or DPF3/BAF45C subunits in neuron-specific complexes (nBAF). The npBAF complex is essential for the self-renewal/proliferative capacity of the multipotent neural stem cells. The nBAF complex along with CREST plays a role regulating the activity of genes essential for dendrite growth. The sequence is that of PHD finger protein 10 (Phf10) from Rattus norvegicus (Rat).